The sequence spans 477 residues: Aspartyl/glutamyl-tRNA(Asn/Gln) amidotransferase subunit B (477 aa).

It belongs to the GatB/GatE family. GatB subfamily. Heterotrimer of A, B and C subunits.

It catalyses the reaction L-glutamyl-tRNA(Gln) + L-glutamine + ATP + H2O = L-glutaminyl-tRNA(Gln) + L-glutamate + ADP + phosphate + H(+). It carries out the reaction L-aspartyl-tRNA(Asn) + L-glutamine + ATP + H2O = L-asparaginyl-tRNA(Asn) + L-glutamate + ADP + phosphate + 2 H(+). In terms of biological role, allows the formation of correctly charged Asn-tRNA(Asn) or Gln-tRNA(Gln) through the transamidation of misacylated Asp-tRNA(Asn) or Glu-tRNA(Gln) in organisms which lack either or both of asparaginyl-tRNA or glutaminyl-tRNA synthetases. The reaction takes place in the presence of glutamine and ATP through an activated phospho-Asp-tRNA(Asn) or phospho-Glu-tRNA(Gln). The chain is Aspartyl/glutamyl-tRNA(Asn/Gln) amidotransferase subunit B from Lactococcus lactis subsp. cremoris (strain SK11).